The chain runs to 567 residues: Pyruvate decarboxylase (567 aa).

Pyruvate contacts are provided by D28 and H117. Thiamine diphosphate is bound by residues T393 and 416–418 (GSI). D447 is a Mg(2+) binding site. Thiamine diphosphate is bound by residues 448-449 (GS) and 475-480 (NDGYTI). 2 residues coordinate Mg(2+): N475 and G477. E481 contributes to the pyruvate binding site.

It belongs to the TPP enzyme family. Homotetramer. Mg(2+) is required as a cofactor. It depends on thiamine diphosphate as a cofactor.

The protein resides in the cytoplasm. The catalysed reaction is a 2-oxocarboxylate + H(+) = an aldehyde + CO2. It carries out the reaction pyruvate + H(+) = acetaldehyde + CO2. The chain is Pyruvate decarboxylase (PDC11) from Candida albicans (strain SC5314 / ATCC MYA-2876) (Yeast).